Reading from the N-terminus, the 251-residue chain is Probable inactive cytidine deaminase 4 (251 aa).

61–63 (NVE) contributes to the substrate binding site. Catalysis depends on glutamate 76, which acts as the Proton donor. Residues 136–251 (EHCSHLKCRA…VFRCHKTAEN (116 aa)) form the CMP/dCMP-type deaminase domain.

It belongs to the cytidine and deoxycytidylate deaminase family. As to quaternary structure, homodimer.

In Arabidopsis thaliana (Mouse-ear cress), this protein is Probable inactive cytidine deaminase 4 (CDA4).